A 463-amino-acid chain; its full sequence is Glutamate--tRNA ligase 2 (463 aa).

The short motif at 10-20 (PSPTGYLHIGG) is the 'HIGH' region element. The 'KMSKS' region motif lies at 238-242 (KLSKR). K241 contributes to the ATP binding site.

This sequence belongs to the class-I aminoacyl-tRNA synthetase family. Glutamate--tRNA ligase type 1 subfamily. Monomer.

It is found in the cytoplasm. It catalyses the reaction tRNA(Glu) + L-glutamate + ATP = L-glutamyl-tRNA(Glu) + AMP + diphosphate. Its function is as follows. Catalyzes the attachment of glutamate to tRNA(Glu) in a two-step reaction: glutamate is first activated by ATP to form Glu-AMP and then transferred to the acceptor end of tRNA(Glu). This Helicobacter acinonychis (strain Sheeba) protein is Glutamate--tRNA ligase 2.